The primary structure comprises 232 residues: V-type ATP synthase subunit E (232 aa).

This sequence belongs to the V-ATPase E subunit family.

Its function is as follows. Produces ATP from ADP in the presence of a proton gradient across the membrane. This chain is V-type ATP synthase subunit E (atpE), found in Treponema pallidum (strain Nichols).